Reading from the N-terminus, the 332-residue chain is Ferredoxin--NADP reductase (332 aa).

FAD is bound by residues aspartate 33, glutamine 41, tyrosine 46, alanine 86, methionine 121, aspartate 282, and serine 325.

Belongs to the ferredoxin--NADP reductase type 2 family. In terms of assembly, homodimer. FAD serves as cofactor.

The catalysed reaction is 2 reduced [2Fe-2S]-[ferredoxin] + NADP(+) + H(+) = 2 oxidized [2Fe-2S]-[ferredoxin] + NADPH. The sequence is that of Ferredoxin--NADP reductase from Sulfurisphaera tokodaii (strain DSM 16993 / JCM 10545 / NBRC 100140 / 7) (Sulfolobus tokodaii).